The sequence spans 84 residues: Small ribosomal subunit protein uS17 (84 aa).

Belongs to the universal ribosomal protein uS17 family. In terms of assembly, part of the 30S ribosomal subunit.

In terms of biological role, one of the primary rRNA binding proteins, it binds specifically to the 5'-end of 16S ribosomal RNA. The sequence is that of Small ribosomal subunit protein uS17 from Actinobacillus pleuropneumoniae serotype 5b (strain L20).